A 654-amino-acid chain; its full sequence is MSDFQHAQLDWDENGQPLSRAFGDVYFSRHSGLNETRHVFLATNRLAERFAALGDGEVLCIGETGFGTGLNFLCAWQLFERVAPAGARLEFVSVEKFPLAAADLRRALALWPELAPWSEALLGQYLAVHPGFQRLAFAGGRVGLTLLLGDALECLPQLDARVDAWFLDGFAPAKNPDMWSPVLFAELARLSAPQATLGTFTSAGFVRRGLVEAGFAMQRVPGYGQKREMLSGTYQGPPANAGKPWYARPAPHAGRRAALVVGGGLAGCASAASLAARGWQVTLIERHPGLAREASGNPQGVLYLKLSAHGTPLSRLVLSGFGHTRRLLERLRRGHDWDACGVLQLAFDAKEAQRQAQLAAAFPADLLHGLEREQAERLAGVALPAGGLFYPEAGWVHPPALCQALAATPGITLLSGRAVRLRREGDDWCAYAGDECLARAPLAILATAADIRDFPPAAELPLKRIRGQVTRLPATPQSRALRTVVCAEGYVAPPRGDEHTLGASFDFKSEDLAPTLAEHQGNLELLREISPDLLQRLGADDLPLERLEGRAAFRCTSPDYLPLVGPLAERAAFDEAYAVLARDARQVPERACPWLPGLYLNSGHGSRGLISAPLSGELLAAWICGEPLPLPRAVAEACHPNRFLLRDLVRGQRG.

Positions 1–235 (MSDFQHAQLD…KREMLSGTYQ (235 aa)) are tRNA (mnm(5)s(2)U34)-methyltransferase. An FAD-dependent cmnm(5)s(2)U34 oxidoreductase region spans residues 261–654 (VGGGLAGCAS…LRDLVRGQRG (394 aa)).

The protein in the N-terminal section; belongs to the methyltransferase superfamily. tRNA (mnm(5)s(2)U34)-methyltransferase family. This sequence in the C-terminal section; belongs to the DAO family. The cofactor is FAD.

The protein resides in the cytoplasm. It catalyses the reaction 5-aminomethyl-2-thiouridine(34) in tRNA + S-adenosyl-L-methionine = 5-methylaminomethyl-2-thiouridine(34) in tRNA + S-adenosyl-L-homocysteine + H(+). Functionally, catalyzes the last two steps in the biosynthesis of 5-methylaminomethyl-2-thiouridine (mnm(5)s(2)U) at the wobble position (U34) in tRNA. Catalyzes the FAD-dependent demodification of cmnm(5)s(2)U34 to nm(5)s(2)U34, followed by the transfer of a methyl group from S-adenosyl-L-methionine to nm(5)s(2)U34, to form mnm(5)s(2)U34. In Pseudomonas aeruginosa (strain ATCC 15692 / DSM 22644 / CIP 104116 / JCM 14847 / LMG 12228 / 1C / PRS 101 / PAO1), this protein is tRNA 5-methylaminomethyl-2-thiouridine biosynthesis bifunctional protein MnmC.